The following is a 1072-amino-acid chain: Carbamoyl phosphate synthase large chain (1072 aa).

A carboxyphosphate synthetic domain region spans residues 1-401 (MPKYKDISKV…SLLKAVRSLE (401 aa)). Residues Arg129, Arg169, Gly175, Gly176, Lys208, Leu210, Glu215, Gly241, Val242, His243, Gln284, and Glu298 each contribute to the ATP site. One can recognise an ATP-grasp 1 domain in the interval 133 to 327 (KRKMQEIGEP…IAKIAAKIAI (195 aa)). Residues Gln284, Glu298, and Asn300 each coordinate Mg(2+). Gln284, Glu298, and Asn300 together coordinate Mn(2+). The oligomerization domain stretch occupies residues 402-544 (IKAYGLRLDS…YIYSTYCEED (143 aa)). The carbamoyl phosphate synthetic domain stretch occupies residues 545–929 (EVETHDIPKV…ALYKALEGAG (385 aa)). Residues 671–861 (SKLLKELNIN…MVKLAVEVAL (191 aa)) enclose the ATP-grasp 2 domain. ATP is bound by residues Arg707, Lys746, Ile748, Glu752, Gly777, Val778, His779, Ser780, Gln820, and Glu832. Residues Gln820, Glu832, and Asn834 each coordinate Mg(2+). Mn(2+) is bound by residues Gln820, Glu832, and Asn834. The 143-residue stretch at 930–1072 (LKIPKKGKIL…QKDNVKNLVL (143 aa)) folds into the MGS-like domain. The segment at 930 to 1072 (LKIPKKGKIL…QKDNVKNLVL (143 aa)) is allosteric domain.

It belongs to the CarB family. Composed of two chains; the small (or glutamine) chain promotes the hydrolysis of glutamine to ammonia, which is used by the large (or ammonia) chain to synthesize carbamoyl phosphate. Tetramer of heterodimers (alpha,beta)4. Requires Mg(2+) as cofactor. Mn(2+) serves as cofactor.

The enzyme catalyses hydrogencarbonate + L-glutamine + 2 ATP + H2O = carbamoyl phosphate + L-glutamate + 2 ADP + phosphate + 2 H(+). It carries out the reaction hydrogencarbonate + NH4(+) + 2 ATP = carbamoyl phosphate + 2 ADP + phosphate + 2 H(+). It participates in amino-acid biosynthesis; L-arginine biosynthesis; carbamoyl phosphate from bicarbonate: step 1/1. The protein operates within pyrimidine metabolism; UMP biosynthesis via de novo pathway; (S)-dihydroorotate from bicarbonate: step 1/3. Its function is as follows. Large subunit of the glutamine-dependent carbamoyl phosphate synthetase (CPSase). CPSase catalyzes the formation of carbamoyl phosphate from the ammonia moiety of glutamine, carbonate, and phosphate donated by ATP, constituting the first step of 2 biosynthetic pathways, one leading to arginine and/or urea and the other to pyrimidine nucleotides. The large subunit (synthetase) binds the substrates ammonia (free or transferred from glutamine from the small subunit), hydrogencarbonate and ATP and carries out an ATP-coupled ligase reaction, activating hydrogencarbonate by forming carboxy phosphate which reacts with ammonia to form carbamoyl phosphate. The chain is Carbamoyl phosphate synthase large chain from Caldanaerobacter subterraneus subsp. tengcongensis (strain DSM 15242 / JCM 11007 / NBRC 100824 / MB4) (Thermoanaerobacter tengcongensis).